The chain runs to 309 residues: Probable RuBisCO transcriptional regulator (309 aa).

The HTH lysR-type domain occupies 5–62 (FTLQQLRILKAIATEKSFTRAAEVLFVSQPSLSKQIKTLESRLNISLLNRENNIVSLT). The segment at residues 22 to 41 (FTRAAEVLFVSQPSLSKQIK) is a DNA-binding region (H-T-H motif).

The protein belongs to the LysR transcriptional regulatory family.

It localises to the plastid. It is found in the chloroplast. Trans-acting transcriptional regulator of RuBisCO genes (rbcL and rbcS) expression. The protein is Probable RuBisCO transcriptional regulator (rbcR) of Trieres chinensis (Marine centric diatom).